Reading from the N-terminus, the 473-residue chain is MPASVVLQQPDIPIAAIATPVGVGALAIVRMSGKGVFGIADRAFRKKSGKAFSFEAAEGFTAHVGTLFDGEGMVDEVVALVFRAPSSFTMEDMVEFTCHGGPVVVRRVLAALLDGGCRLAEPGEFTRRAFLNGRIDLLQAEAIGEMIHARTDGAFRTAVTQMQGGLSRRLLEMREGLLQSCALLELELDFSEEDVEFQSREELRGEVIRLQTELSGLVDSYQHGRLLSEGVSTVIAGRPNAGKSTLLNKLLGEERSIVSHMPGTTRDYIEECFVYDKTMFRLTDTAGLRESEEDVEHEGIERSYRKISEADLILYMLDVSGEGFREEAVSAAALCAGHPEARMILLANKTDLVKDSALRIAALETAAGSPVVPMAARSGEGIEELKLLMASMVEGLDKLHEASVLVTSLRHYEALRNASDALHNALGLIEGGEATELIAFELRSALDYVGEITGKVVSEELLNTIFGQFCIGK.

Positions 30, 95, and 134 each coordinate (6S)-5-formyl-5,6,7,8-tetrahydrofolate. One can recognise a TrmE-type G domain in the interval glycine 230–glutamate 394. Residues asparagine 240–threonine 245, serine 259–threonine 265, and aspartate 284–glycine 287 contribute to the GTP site. Mg(2+) contacts are provided by serine 244 and threonine 265. Residue lysine 473 participates in (6S)-5-formyl-5,6,7,8-tetrahydrofolate binding.

It belongs to the TRAFAC class TrmE-Era-EngA-EngB-Septin-like GTPase superfamily. TrmE GTPase family. Homodimer. Heterotetramer of two MnmE and two MnmG subunits. The cofactor is K(+).

It localises to the cytoplasm. Exhibits a very high intrinsic GTPase hydrolysis rate. Involved in the addition of a carboxymethylaminomethyl (cmnm) group at the wobble position (U34) of certain tRNAs, forming tRNA-cmnm(5)s(2)U34. This is tRNA modification GTPase MnmE from Chlorobium luteolum (strain DSM 273 / BCRC 81028 / 2530) (Pelodictyon luteolum).